Consider the following 239-residue polypeptide: Ribosomal RNA small subunit methyltransferase G (239 aa).

S-adenosyl-L-methionine-binding positions include glycine 78, phenylalanine 83, 129–130 (AE), and arginine 148.

It belongs to the methyltransferase superfamily. RNA methyltransferase RsmG family.

It is found in the cytoplasm. In terms of biological role, specifically methylates the N7 position of a guanine in 16S rRNA. This is Ribosomal RNA small subunit methyltransferase G from Clostridium botulinum (strain Kyoto / Type A2).